Here is a 208-residue protein sequence, read N- to C-terminus: Large ribosomal subunit protein uL4 (208 aa).

The tract at residues 54-78 (RAEVSHTTKKPWNQKGTGRARAGMS) is disordered.

This sequence belongs to the universal ribosomal protein uL4 family. Part of the 50S ribosomal subunit.

Functionally, one of the primary rRNA binding proteins, this protein initially binds near the 5'-end of the 23S rRNA. It is important during the early stages of 50S assembly. It makes multiple contacts with different domains of the 23S rRNA in the assembled 50S subunit and ribosome. Forms part of the polypeptide exit tunnel. The polypeptide is Large ribosomal subunit protein uL4 (Methylobacillus flagellatus (strain ATCC 51484 / DSM 6875 / VKM B-1610 / KT)).